A 153-amino-acid polypeptide reads, in one-letter code: Histone H2B.6 (153 aa).

Basic and acidic residues-rich tracts occupy residues 1 to 28 (MAPKAEKKPAAKKPAEEEPAAEKAEKAP) and 36 to 53 (EKRLPAGKGEKGSGEGKK). The interval 1–60 (MAPKAEKKPAAKKPAEEEPAAEKAEKAPAGKKPKAEKRLPAGKGEKGSGEGKKAGRKKGK) is disordered. Residues lysine 7 and lysine 37 each carry the N6-acetyllysine modification. Residue lysine 149 forms a Glycyl lysine isopeptide (Lys-Gly) (interchain with G-Cter in ubiquitin) linkage.

It belongs to the histone H2B family. In terms of assembly, the nucleosome is a histone octamer containing two molecules each of H2A, H2B, H3 and H4 assembled in one H3-H4 heterotetramer and two H2A-H2B heterodimers. The octamer wraps approximately 147 bp of DNA. Can be acetylated to form H2BK6ac and H2BK33ac. In terms of processing, monoubiquitinated by BRE1 to form H2BK143ub1 and deubiquitinated by UBP26. Required for heterochromatic histone H3 di- and trimethylation at H3K4me. May give a specific tag for epigenetic transcriptional activation.

The protein resides in the nucleus. It localises to the chromosome. In terms of biological role, core component of nucleosome. Nucleosomes wrap and compact DNA into chromatin, limiting DNA accessibility to the cellular machineries which require DNA as a template. Histones thereby play a central role in transcription regulation, DNA repair, DNA replication and chromosomal stability. DNA accessibility is regulated via a complex set of post-translational modifications of histones, also called histone code, and nucleosome remodeling. In Oryza sativa subsp. japonica (Rice), this protein is Histone H2B.6 (H2B.6).